A 73-amino-acid chain; its full sequence is uncharacterized protein (73 aa).

The helical transmembrane segment at 54–72 (VSFIVAPTVMQVQCLFFFI) threads the bilayer.

The protein localises to the membrane. This is an uncharacterized protein from Saccharomyces cerevisiae (strain ATCC 204508 / S288c) (Baker's yeast).